The primary structure comprises 613 residues: Ribosome-associated molecular chaperone SSB1 (613 aa).

Residues 1–391 (MAEGVFQGAI…ILTGQSTSED (391 aa)) form a nucleotide binding domain (NBD) region. ATP-binding positions include 16–18 (TTY), Lys73, 205–207 (GGT), 271–278 (ERAKRTLS), and Gly342. The inter-domain linker stretch occupies residues 392–402 (TKDLLLLDVAP). The segment at 403–613 (LSLGVGMQGD…RVVTKAMSSR (211 aa)) is substrate binding domain (SBD). The segment at 516–612 (SDEIEKMVNQ…KRVVTKAMSS (97 aa)) is lid domain (SBDalpha). A Nuclear export signal motif is present at residues 574–582 (IESALSDAL).

This sequence belongs to the heat shock protein 70 family. Ssb-type Hsp70 subfamily. In terms of assembly, binds to ribosomes. Binds close to the ribosomal tunnel exit via contacts with both ribosomal proteins and rRNA. Directly interacts with nascent polypeptides. This interaction is dependent on the ribosome-associated complex (RAC). Interacts with SSE1. Interacts with FES1.

The protein resides in the cytoplasm. It carries out the reaction ATP + H2O = ADP + phosphate + H(+). Its function is as follows. Ribosome-bound, Hsp70-type chaperone that assists in the cotranslational folding of newly synthesized proteins in the cytosol. Stimulates folding by interacting with nascent chains, binding to short, largely hydrophobic sequences exposed by unfolded proteins, thereby stabilizing longer, more slowly translated, and aggregation-prone nascent polypeptides and domains that cannot fold stably until fully synthesized. The Hsp70-protein substrate interaction depends on ATP-binding and on allosteric regulation between the NBD and the SBD. The ATP-bound state is characterized by a fast exchange rate of substrate (low affinity state), while in the ADP-bound state exchange is much slower (high affinity state). During the Hsp70 cycle, the chaperone switches between the ATP-bound state (open conformation) and the ADP-bound state (closed conformation) by major conformational rearrangements involving mainly the lid domain. Ssb cooperates with a specific Hsp40/Hsp70 co-chaperone termed the ribosome-associated complex (RAC), which stimulates the ATPase activity of the ribosome-associated pool of Ssbs and switches it to the high affinity substrate binding state. Hsp110 chaperone SSE1 and FES1 act as nucleotide exchange factors that cause substrate release. This is Ribosome-associated molecular chaperone SSB1 (SSB1) from Zygosaccharomyces rouxii (strain ATCC 2623 / CBS 732 / NBRC 1130 / NCYC 568 / NRRL Y-229).